An 830-amino-acid chain; its full sequence is DNA helicase MCM8 (830 aa).

One can recognise an MCM domain in the interval 392–599 (LLKLIVNSLC…QHDHLLSEHV (208 aa)). 444–451 (GDPGLGKS) contributes to the ATP binding site. Ser-620 is subject to Phosphoserine.

This sequence belongs to the MCM family. As to quaternary structure, component of the MCM8-MCM9 complex, which forms a hexamer composed of MCM8 and MCM9. Interacts with the DNA mismatch repair (MMR) complex composed at least of MSH2, MSH3, MSH6, PMS1 and MLH1. Interacts with RAD51; the interaction recruits RAD51 to DNA damage sites. Interacts with the MRN complex composed of MRE11, RAD50 and NBN/NBS1. Interacts with CDC6 and ORC2. Interacts with HROB; the interaction recruits the MCM8-MCM9 complex to DNA damage sites.

It localises to the nucleus. The protein resides in the chromosome. It catalyses the reaction ATP + H2O = ADP + phosphate + H(+). Functionally, component of the MCM8-MCM9 complex, a complex involved in the repair of double-stranded DNA breaks (DBSs) and DNA interstrand cross-links (ICLs) by homologous recombination (HR). Required for DNA resection by the MRE11-RAD50-NBN/NBS1 (MRN) complex by recruiting the MRN complex to the repair site and by promoting the complex nuclease activity. Probably by regulating the localization of the MNR complex, indirectly regulates the recruitment of downstream effector RAD51 to DNA damage sites including DBSs and ICLs. The MCM8-MCM9 complex is dispensable for DNA replication and S phase progression. However, may play a non-essential for DNA replication: may be involved in the activation of the prereplicative complex (pre-RC) during G(1) phase by recruiting CDC6 to the origin recognition complex (ORC). Probably by regulating HR, plays a key role during gametogenesis. Stabilizes MCM9 protein. In Rattus norvegicus (Rat), this protein is DNA helicase MCM8 (Mcm8).